Consider the following 477-residue polypeptide: Prolyl tri/tetrapeptidyl aminopeptidase (477 aa).

The signal sequence occupies residues Met1–Ala27. The propeptide occupies Ala28–Pro33. A disordered region spans residues Gln448–Pro477. Over residues Ala462–Pro477 the composition is skewed to basic and acidic residues.

It belongs to the peptidase S37 family.

Its subcellular location is the secreted. The protein resides in the cell surface. Completely inhibited by the serine protease inhibitor phenylmethylsulfonyl fluoride. Partially inhibited by the serine protease inhibitor Pefabloc. Not inhibited by cysteine proteinase-specific or metalloproteinase-specific inhibitors. Not inhibited by prolinal or its derivatives. EDTA and EGTA both partially inhibit this enzyme. EDTA has no effect on activity. Has proline-specific tripeptidyl aminopeptidase and tetrapeptidyl aminopeptidase activity. Activity is highest against tripeptides containing an Ala-Pro motif. Involved in the final processing of transglutaminase, by removing either the tetrapeptide Phe-Arg-Ala-Pro left after TAMEP or SAM-P45 hydrolysis, or the tripeptide Arg-Ala-Pro left after SGMP II hydrolysis in a single step. This chain is Prolyl tri/tetrapeptidyl aminopeptidase (ptp), found in Streptomyces mobaraensis (Streptoverticillium mobaraense).